A 1124-amino-acid polypeptide reads, in one-letter code: tRNA (34-2'-O)-methyltransferase regulator WDR6 (1124 aa).

Residue M1 is modified to N-acetylmethionine. 19 WD repeats span residues 53–97, 105–143, 147–189, 200–238, 247–285, 289–327, 335–376, 381–422, 425–470, 476–520, 557–596, 602–640, 643–682, 743–789, 852–897, 905–950, 974–1015, 1039–1076, and 1082–1124; these read MKRV…IVKI, RELWRSGLWNMSDWIWDARWLEGNIALALGHNSVVLYDP, CSLQ…VWYP, VPDRRVSGHVGVIFSMSYLESKGLLATASEDRSVRIWKV, RVQNIGHCFGHSARVWQVKLLENYLISAGEDCVCLVWSH, ILQAFRGHQGRGIRALAAHERQAWVITGGDDSGIRLWHL, SGVF…LYDL, WEQL…VVPI, PTAA…ISAA, IFVK…LYPS, PMSTLPSLHGKQGVTSVTCHGGYVYTTGRDGSYYQLFVRG, VLRQKPCRGMNWVAGVRMVADGNMVILGFHANEFVVWSP, HEKLHIINCGGGHRSWAFSDTEAAMAFAYLKDGDVMLYRA, LIDI…VWGV, RHRH…LFLL, QLLA…FWDL, GSPC…VFVL, EEYSVPCAHAAHVTGLKILSRSLMVSASIDQRLTFWRL, and TFMN…NWYD.

Belongs to the WD repeat WDR6 family. In terms of assembly, interacts with FTSJ1; the interaction is direct, and required for 2'-O-methylation of position 34 in substrate tRNAs. Interacts with IRS4. Interacts with STK11/LKB1.

The protein localises to the cytoplasm. Together with methyltransferase FTSJ1, methylates the 2'-O-ribose of nucleotides at position 34 of the tRNA anticodon loop of substrate tRNAs. Required for the correct positioning of the substrate tRNA for methylation. Required to suppress amino acid starvation-induced autophagy. Enhances the STK11/LKB1-induced cell growth suppression activity. The polypeptide is tRNA (34-2'-O)-methyltransferase regulator WDR6 (WDR6) (Bos taurus (Bovine)).